A 298-amino-acid polypeptide reads, in one-letter code: Small ribosomal subunit protein uS2 (298 aa).

The disordered stretch occupies residues 272–298; the sequence is EGGDWAASSAAPAGESWAEAQPTEAKW.

The protein belongs to the universal ribosomal protein uS2 family. In terms of assembly, component of the small ribosomal subunit. Mature ribosomes consist of a small (40S) and a large (60S) subunit. The 40S subunit contains about 33 different proteins and 1 molecule of RNA (18S). The 60S subunit contains about 49 different proteins and 3 molecules of RNA (25S, 5.8S and 5S). Interacts with rps21.

It localises to the cytoplasm. Required for the assembly and/or stability of the 40S ribosomal subunit. Required for the processing of the 20S rRNA-precursor to mature 18S rRNA in a late step of the maturation of 40S ribosomal subunits. The polypeptide is Small ribosomal subunit protein uS2 (rps0) (Aspergillus niger (strain ATCC MYA-4892 / CBS 513.88 / FGSC A1513)).